The following is a 208-amino-acid chain: Urease accessory protein UreE (208 aa).

Residues 145-165 (EGGAYSAGGHGHTHAPAATPV) form a disordered region.

It belongs to the UreE family.

It localises to the cytoplasm. Its function is as follows. Involved in urease metallocenter assembly. Binds nickel. Probably functions as a nickel donor during metallocenter assembly. The protein is Urease accessory protein UreE of Polaromonas naphthalenivorans (strain CJ2).